The following is a 166-amino-acid chain: UPF0304 protein VIBHAR_01542 (166 aa).

It belongs to the UPF0304 family.

The protein is UPF0304 protein VIBHAR_01542 of Vibrio campbellii (strain ATCC BAA-1116).